A 524-amino-acid chain; its full sequence is Keratin, type II cytoskeletal 72 (524 aa).

The interval 1–136 (MSRQLNLYPG…DPEIQKVRAQ (136 aa)) is head. The coil 1A stretch occupies residues 137–172 (EREQIKALNNKFASFIDKVRFLEQQNQVLGTKWELL). The region spanning 137–450 (EREQIKALNN…KLLEGEECRM (314 aa)) is the IF rod domain. The interval 173–191 (QQLDLNNCKNNLEPILEGY) is linker 1. Positions 192-283 (TSNLRKQLEM…CLYEGEIAQL (92 aa)) are coil 1B. Positions 284-307 (QSHISDTSVILSMDNNRDLDLDSI) are linker 12. A coil 2 region spans residues 308–446 (IAQVRAQYEE…ATYRKLLEGE (139 aa)). The tail stretch occupies residues 447–524 (ECRMSGEYPN…SSCATKKASR (78 aa)). The segment at 495–524 (KTKGSCGGSELKDAPAKTSGSSCATKKASR) is disordered.

It belongs to the intermediate filament family. Heterotetramer of two type I and two type II keratins.

Has a role in hair formation. Specific component of keratin intermediate filaments in the inner root sheath (IRS) of the hair follicle. This is Keratin, type II cytoskeletal 72 (KRT72) from Bos taurus (Bovine).